A 124-amino-acid chain; its full sequence is uncharacterized protein (124 aa).

3 helical membrane-spanning segments follow: residues 13 to 33, 43 to 63, and 71 to 91; these read LIQI…VLQL, GLFW…PEFF, and GVGR…FYLI.

It to M.thermoautotrophicum MTH137.

Its subcellular location is the cell membrane. This is an uncharacterized protein from Methanocaldococcus jannaschii (strain ATCC 43067 / DSM 2661 / JAL-1 / JCM 10045 / NBRC 100440) (Methanococcus jannaschii).